The sequence spans 228 residues: Large ribosomal subunit protein uL3 (228 aa).

Belongs to the universal ribosomal protein uL3 family. As to quaternary structure, part of the 50S ribosomal subunit. Forms a cluster with proteins L14 and L19.

One of the primary rRNA binding proteins, it binds directly near the 3'-end of the 23S rRNA, where it nucleates assembly of the 50S subunit. This chain is Large ribosomal subunit protein uL3, found in Leuconostoc mesenteroides subsp. mesenteroides (strain ATCC 8293 / DSM 20343 / BCRC 11652 / CCM 1803 / JCM 6124 / NCDO 523 / NBRC 100496 / NCIMB 8023 / NCTC 12954 / NRRL B-1118 / 37Y).